A 230-amino-acid polypeptide reads, in one-letter code: UPF0494 membrane protein C1348.07 (230 aa).

Helical transmembrane passes span 78-98, 120-140, and 148-168; these read WPLL…NFEV, IWGP…GLIY, and AIPL…VAMV.

It belongs to the UPF0494 family.

The protein resides in the vacuole. The protein localises to the membrane. The protein is UPF0494 membrane protein C1348.07 of Schizosaccharomyces pombe (strain 972 / ATCC 24843) (Fission yeast).